Here is a 571-residue protein sequence, read N- to C-terminus: UvrABC system protein C (571 aa).

Residues 15–93 (TSPGVYLWKD…IDRYNPEFNI (79 aa)) enclose the GIY-YIG domain. The 36-residue stretch at 184–219 (NNYINELTNKMHQAANNMQFELALFLRDGLTYLKKL) folds into the UVR domain.

Belongs to the UvrC family. As to quaternary structure, interacts with UvrB in an incision complex.

The protein resides in the cytoplasm. In terms of biological role, the UvrABC repair system catalyzes the recognition and processing of DNA lesions. UvrC both incises the 5' and 3' sides of the lesion. The N-terminal half is responsible for the 3' incision and the C-terminal half is responsible for the 5' incision. This Mycoplasmopsis bovis (strain ATCC 25523 / DSM 22781 / NCTC 10131 / PG45) (Mycoplasma bovis) protein is UvrABC system protein C.